The chain runs to 478 residues: Cytochrome c-552 (478 aa).

The signal sequence occupies residues 1–26; sequence MTRIKINARRIFSLLIPFFFFTSVHA. Histidine 94 provides a ligand contact to heme c. Heme is bound by residues cysteine 122, cysteine 125, and lysine 126. The heme c site is built by cysteine 160, cysteine 163, histidine 164, cysteine 209, cysteine 212, and histidine 213. Positions 215, 216, 261, and 263 each coordinate Ca(2+). Tyrosine 216 is a substrate binding site. Residue histidine 264 participates in substrate binding. Heme c contacts are provided by histidine 275, cysteine 282, cysteine 285, histidine 286, histidine 301, cysteine 314, cysteine 317, histidine 318, and histidine 393.

Belongs to the cytochrome c-552 family. It depends on Ca(2+) as a cofactor. Requires heme c as cofactor.

It is found in the periplasm. The catalysed reaction is 6 Fe(III)-[cytochrome c] + NH4(+) + 2 H2O = 6 Fe(II)-[cytochrome c] + nitrite + 8 H(+). Its pathway is nitrogen metabolism; nitrate reduction (assimilation). In terms of biological role, catalyzes the reduction of nitrite to ammonia, consuming six electrons in the process. The sequence is that of Cytochrome c-552 from Escherichia coli O6:H1 (strain CFT073 / ATCC 700928 / UPEC).